Reading from the N-terminus, the 201-residue chain is Orotate phosphoribosyltransferase (201 aa).

Residue 113-121 (EDIITTGKS) participates in 5-phospho-alpha-D-ribose 1-diphosphate binding. Residues Thr117 and Arg145 each contribute to the orotate site.

Belongs to the purine/pyrimidine phosphoribosyltransferase family. PyrE subfamily. As to quaternary structure, homodimer. Requires Mg(2+) as cofactor.

It catalyses the reaction orotidine 5'-phosphate + diphosphate = orotate + 5-phospho-alpha-D-ribose 1-diphosphate. Its pathway is pyrimidine metabolism; UMP biosynthesis via de novo pathway; UMP from orotate: step 1/2. Its function is as follows. Catalyzes the transfer of a ribosyl phosphate group from 5-phosphoribose 1-diphosphate to orotate, leading to the formation of orotidine monophosphate (OMP). In Helicobacter pylori (strain HPAG1), this protein is Orotate phosphoribosyltransferase.